The primary structure comprises 172 residues: Arginine repressor (172 aa).

This sequence belongs to the ArgR family.

Its subcellular location is the cytoplasm. It functions in the pathway amino-acid biosynthesis; L-arginine biosynthesis [regulation]. Functionally, regulates arginine biosynthesis genes. The chain is Arginine repressor from Bifidobacterium adolescentis (strain ATCC 15703 / DSM 20083 / NCTC 11814 / E194a).